The chain runs to 44 residues: Cytochrome b559 subunit beta (44 aa).

The chain crosses the membrane as a helical span at residues tryptophan 19–alanine 35. Residue histidine 23 participates in heme binding.

Belongs to the PsbE/PsbF family. In terms of assembly, heterodimer of an alpha subunit and a beta subunit. PSII is composed of 1 copy each of membrane proteins PsbA, PsbB, PsbC, PsbD, PsbE, PsbF, PsbH, PsbI, PsbJ, PsbK, PsbL, PsbM, PsbT, PsbX, PsbY, PsbZ, Psb30/Ycf12, peripheral proteins PsbO, CyanoQ (PsbQ), PsbU, PsbV and a large number of cofactors. It forms dimeric complexes. Requires heme b as cofactor.

It localises to the cellular thylakoid membrane. In terms of biological role, this b-type cytochrome is tightly associated with the reaction center of photosystem II (PSII). PSII is a light-driven water:plastoquinone oxidoreductase that uses light energy to abstract electrons from H(2)O, generating O(2) and a proton gradient subsequently used for ATP formation. It consists of a core antenna complex that captures photons, and an electron transfer chain that converts photonic excitation into a charge separation. This chain is Cytochrome b559 subunit beta, found in Crocosphaera subtropica (strain ATCC 51142 / BH68) (Cyanothece sp. (strain ATCC 51142)).